The sequence spans 889 residues: Chromatin structure-remodeling complex subunit RSC2 (889 aa).

Residues 12–120 enclose the Bromo 1 domain; it reads QNSSALYKDL…KYLKDTIYPN (109 aa). The tract at residues 151-268 is disordered; it reads EKAEEVARAN…QVSRTQVKRG (118 aa). Over residues 158 to 174 the composition is skewed to low complexity; the sequence is RANAARAESSSSMNSTE. The segment covering 197-209 has biased composition (acidic residues); that stretch reads NNDEDYEATDMDI. The segment covering 210–222 has biased composition (basic and acidic residues); that stretch reads DNPKDADFPDLIR. The span at 241-250 shows a compositional bias: polar residues; the sequence is STTPSHSGTP. Residues 255–268 show a composition bias toward basic residues; sequence PRHRQVSRTQVKRG. Residues 280–382 enclose the Bromo 2 domain; that stretch reads RMKNVMKVLK…KTFTSLARFE (103 aa). The 119-residue stretch at 408-526 folds into the BAH domain; the sequence is ISYHVGDWAL…ESDKIFNKIR (119 aa). The segment at 601-624 is disordered; sequence GEYATSDDCPRYIIRPNDSPEEGQ. Tyrosine 612 is subject to Phosphotyrosine. Phosphoserine is present on serine 682. Residues 831-865 form a disordered region; it reads EVEETMEDVTGKDKDDDGLEPDVENEKESLPGPFV.

Belongs to the RSC1 family. As to quaternary structure, component of the two forms of the RSC complex composed of at least either RSC1 or RSC2, and ARP7, ARP9, LDB7, NPL6, RSC3, RSC30, RSC4, RSC58, RSC6, RSC8, RSC9, SFH1, STH1, HTL1 and probably RTT102. The complexes interact with histone and histone variant components of centromeric chromatin.

Its subcellular location is the nucleus. Component of the chromatin structure remodeling complex (RSC), which is involved in transcription regulation and nucleosome positioning. RSC is responsible for the transfer of a histone octamer from a nucleosome core particle to naked DNA. The reaction requires ATP and involves an activated RSC-nucleosome intermediate. Remodeling reaction also involves DNA translocation, DNA twist and conformational change. As a reconfigurer of centromeric and flanking nucleosomes, RSC complex is required both for proper kinetochore function in chromosome segregation and, via a PKC1-dependent signaling pathway, for organization of the cellular cytoskeleton. This subunit is involved in meiotic sporulation through regulating IME2 expression, and is also essential for 2-micron plasmid maintenance and for normal REP1 protein localization. The sequence is that of Chromatin structure-remodeling complex subunit RSC2 (RSC2) from Saccharomyces cerevisiae (strain ATCC 204508 / S288c) (Baker's yeast).